A 108-amino-acid chain; its full sequence is Anthranilate 1,2-dioxygenase ferredoxin subunit (108 aa).

The region spanning 9–105 (WHPLGAIDEF…IRIVDGQVEV (97 aa)) is the Rieske domain. Residues Cys49, His51, Cys68, and His71 each contribute to the [2Fe-2S] cluster site.

It belongs to the bacterial ring-hydroxylating dioxygenase ferredoxin component family. Part of a multicomponent enzyme system composed of a reductase (AndAa), a ferredoxin (AndAb) and a two-subunit oxygenase component (AndAc and AndAd). [2Fe-2S] cluster serves as cofactor.

It functions in the pathway aromatic compound metabolism; anthranilate degradation via hydroxylation; catechol from anthranilate: step 1/1. Part of the multicomponent anthranilate dioxygenase, that converts anthranilate to catechol. This protein seems to be a 2Fe-2S ferredoxin. The sequence is that of Anthranilate 1,2-dioxygenase ferredoxin subunit from Burkholderia cepacia (Pseudomonas cepacia).